The sequence spans 544 residues: U1 small nuclear ribonucleoprotein component PRP42 (544 aa).

HAT repeat units follow at residues 7–39 (LIHDENFSTLTLNVSRYPKSLAYWEKLLNYIVK), 51–83 (QLLKLIRCTYSSMLNEFPYLENYYIDFALLEYK), 85–118 (GNVSMSHKIFQRGLQAFNQRSLLLWTSYLKFCNN), 121–156 (SHQKQLFKKYETAEEYVGLHFFSGEFWDLYLEQISS), and 163–195 (KYWNVLRKILEIPLHSFSKFYALWLQRIDDIMD). The Nuclear localization signal signature appears at 230-235 (KKKLKK). HAT repeat units follow at residues 255–288 (FESKIYINYYTSPETLVSSDEIETWIKYLDYTIT), 290–322 (QTDSLTHLNFQRALLPLAHYDLVWIKYSKWLIN), 366–397 (NLLEKIESSYSDNVENVDDFEIFWDYLQFKTF), and 456–488 (VEKNIFQKIIEFGWEYYLQNGMFWNCYCRLIYF).

As to quaternary structure, component of the 18S U1 snRNP particle, a subcomplex of the spliceosome.

The protein localises to the nucleus. Functionally, essential component of the U1 snRNP particle, which recognizes and binds the 5'-splice site of pre-mRNA. Together with other non-snRNP factors, U1 snRNP forms the spliceosomal commitment complex, that targets pre-mRNA to the splicing pathway. U1 snRNP is cotranscriptionally recruited to intron-containing genes. Required for U1 snRNP biogenesis. This chain is U1 small nuclear ribonucleoprotein component PRP42 (PRP42), found in Saccharomyces cerevisiae (strain ATCC 204508 / S288c) (Baker's yeast).